The sequence spans 95 residues: RING finger protein Z (95 aa).

Gly2 carries N-myristoyl glycine; by host lipidation. The RING-type; atypical zinc finger occupies 38 to 74 (CKSCWFANKGLIKCSNHYLCLKCLTAMLSRSDYCGIC). Residues 88-91 (PSAP) carry the PTAP/PSAP motif motif.

It belongs to the arenaviridae Z protein family. As to quaternary structure, interacts with protein NP; this interaction probably directs the encapsidated genome to budding sites. Interacts (via RING domain) with polymerase L; this interaction inhibits viral transcription and replication, Z partially blocks the product exit tunnel for the releasing nascent RNA product. Interacts with the glycoprotein complex; this interaction plays a role in virion budding. Interacts with host eIF4E; this interaction results in eIF4E reduced affinity for its substrate, the 5'-m7 G cap structure. Interacts (via late-budding domain) with host TSG101; this interaction is essential for budding and release of viral particles. Interacts with host RPLP0; this interaction may serve to load ribosome-like particles inside the virion. Interacts with host PML; this interaction induces PML bodies redistribution in the cytoplasm upon viral infection. Myristoylation is required for the role of RING finger protein Z in assembly and budding.

It localises to the virion. The protein localises to the host cytoplasm. It is found in the host perinuclear region. The protein resides in the host cell membrane. In terms of biological role, plays a crucial role in virion assembly and budding. Expressed late in the virus life cycle, it acts as an inhibitor of viral transcription and RNA synthesis by interacting with the viral polymerase L. Presumably recruits the NP encapsidated genome to cellular membranes at budding sites via direct interaction with NP. Plays critical roles in the final steps of viral release by interacting with host TSG101, a member of the vacuolar protein-sorting pathway and using other cellular host proteins involved in vesicle formation pathway. The budding of the virus progeny occurs after association of protein Z with the viral glycoprotein complex SSP-GP1-GP2 at the cell periphery, step that requires myristoylation of protein Z. Also selectively represses protein production by associating with host eIF4E. In cell-based minigenome assay, has an inhibitory effect on the ribonucleoprotein machinery (vRNP), which is responsible for the replication and transcription of the viral genome. The protein is RING finger protein Z of Bear Canyon mammarenavirus (isolate Mouse/United States/AV A0070039/2000) (BCNV).